The sequence spans 348 residues: Protein RecA (348 aa).

69-76 serves as a coordination point for ATP; sequence GPESSGKT.

Belongs to the RecA family.

The protein localises to the cytoplasm. Functionally, can catalyze the hydrolysis of ATP in the presence of single-stranded DNA, the ATP-dependent uptake of single-stranded DNA by duplex DNA, and the ATP-dependent hybridization of homologous single-stranded DNAs. It interacts with LexA causing its activation and leading to its autocatalytic cleavage. The protein is Protein RecA of Gluconacetobacter polyoxogenes (Acetobacter polyoxogenes).